Consider the following 709-residue polypeptide: Solute carrier family 15 member 1 (709 aa).

Residues 1–21 form a helical membrane-spanning segment; the sequence is MGMSKSRGCFGYPLSIFFIVV. At 22–53 the chain is on the extracellular side; sequence NEFCERFSYYGMRALLVLYFRNFLGWDDNLST. Asn50 is a glycosylation site (N-linked (GlcNAc...) asparagine). A helical membrane pass occupies residues 54 to 74; sequence AIYHTFVALCYLTPILGALIA. Over 75–82 the chain is Cytoplasmic; the sequence is DSWLGKFK. Residues 83-103 traverse the membrane as a helical segment; the sequence is TIVSLSIVYTIGQAVISVSSI. At 104-118 the chain is on the extracellular side; sequence NDLTDHDHNGSPDSL. The helical transmembrane segment at 119–139 threads the bilayer; it reads PVHVALSMVGLALIALGTGGI. The Cytoplasmic segment spans residues 140–161; it reads KPCVSAFGGDQFEEGQEKQRNR. Residues 162–182 traverse the membrane as a helical segment; sequence FFSIFYLAINGGSLLSTIITP. At 183–198 the chain is on the extracellular side; sequence ILRVQQCGIHSQQACY. The helical transmembrane segment at 199–219 threads the bilayer; that stretch reads PLAFGVPAALMAVALIVFVLG. Residues 220–276 are Cytoplasmic-facing; it reads SGMYKKFQPQGNIMGKVAKCIGFAIKNRFRHRSKAYPKREHWLDWAKEKYDERLISQ. A helical membrane pass occupies residues 277–297; it reads IKMVTKVMFLYIPLPMFWALF. At 298–327 the chain is on the extracellular side; that stretch reads DQQGSRWTLQATTMNGKIGAIEIQPDQMQT. A helical membrane pass occupies residues 328–348; sequence VNAILIVIMVPIVDAVVYPLI. At 349 to 361 the chain is on the cytoplasmic side; it reads AKCGFNFTSLKKM. A helical transmembrane segment spans residues 362–382; sequence TVGMFLASMAFVVAAIVQVEI. The Extracellular portion of the chain corresponds to 383–585; the sequence is DKTLPVFPGG…PPNTVNMALQ (203 aa). Positions 383-585 are extracellular domain (ECD); the sequence is DKTLPVFPGG…PPNTVNMALQ (203 aa). N-linked (GlcNAc...) asparagine glycans are attached at residues Asn406, Asn439, Asn515, and Asn532. The helical transmembrane segment at 586 to 606 threads the bilayer; it reads IPQYFLLTCGEVVFSVTGLEF. At 607 to 620 the chain is on the cytoplasmic side; the sequence is SYSQAPSNMKSVLQ. Residues 621–641 traverse the membrane as a helical segment; sequence AGWLLTVAVGNIIVLIVAGAG. The Extracellular portion of the chain corresponds to 642 to 646; sequence HFPKQ. Residues 647 to 667 form a helical membrane-spanning segment; sequence WAEYILFASLLLVVCVIFAIM. At 668–709 the chain is on the cytoplasmic side; the sequence is ARFYTYINPAEIEAQFDEDEKKKGIGKENPYSSLEPVSQTNM. The segment at 690–709 is disordered; it reads KGIGKENPYSSLEPVSQTNM. Residues 697–709 show a composition bias toward polar residues; it reads PYSSLEPVSQTNM.

Belongs to the major facilitator superfamily. Proton-dependent oligopeptide transporter (POT/PTR) (TC 2.A.17) family. As to quaternary structure, interacts (via extracellular domain region) with trypsin.

Its subcellular location is the apical cell membrane. It catalyses the reaction a dipeptide(out) + H(+)(out) = a dipeptide(in) + H(+)(in). The enzyme catalyses an L-amino acid tripeptide(out) + H(+)(out) = an L-amino acid tripeptide(in) + H(+)(in). It carries out the reaction L-alanyl-L-lysine(out) + H(+)(out) = L-alanyl-L-lysine(in) + H(+)(in). The catalysed reaction is L-alanyl-L-proline(out) + H(+)(out) = L-alanyl-L-proline(in) + H(+)(in). It catalyses the reaction L-alanyl-L-valine(out) + H(+)(out) = L-alanyl-L-valine(in) + H(+)(in). The enzyme catalyses carnosine(out) + H(+)(out) = carnosine(in) + H(+)(in). It carries out the reaction glycyl-L-glutamine(out) + H(+)(out) = glycyl-L-glutamine(in) + H(+)(in). The catalysed reaction is glycyl-L-leucine(out) + H(+)(out) = glycyl-L-leucine(in) + H(+)(in). It catalyses the reaction glycyl-L-proline(out) + H(+)(out) = glycyl-L-proline(in) + H(+)(in). The enzyme catalyses glycyl-sarcosine(out) + H(+)(out) = glycyl-sarcosine(in) + H(+)(in). It carries out the reaction L-leucyl-L-leucine(out) + H(+)(out) = L-leucyl-L-leucine(in) + H(+)(in). The catalysed reaction is L-leucyl-L-proline(out) + H(+)(out) = L-leucyl-L-proline(in) + H(+)(in). It catalyses the reaction L-phenylalanyl-L-leucine(out) + H(+)(out) = L-phenylalanyl-L-leucine(in) + H(+)(in). The enzyme catalyses L-phenylalanyl-L-phenylalanine(out) + H(+)(out) = L-phenylalanyl-L-phenylalanine(in) + H(+)(in). It carries out the reaction L-lysyl-glycine(out) + H(+)(out) = L-lysyl-glycine(in) + H(+)(in). The catalysed reaction is L-tyrosylglycine(out) + H(+)(out) = L-tyrosylglycine(in) + H(+)(in). It catalyses the reaction L-alanyl-L-aspartate(out) + 2 H(+)(out) = L-alanyl-L-aspartate(in) + 2 H(+)(in). The enzyme catalyses L-aspartyl-glycine(out) + 2 H(+)(out) = L-aspartyl-glycine(in) + 2 H(+)(in). It carries out the reaction glycyl-L-aspartate(out) + 2 H(+)(out) = glycyl-L-aspartate(in) + 2 H(+)(in). The catalysed reaction is glycyl-L-glutamate(out) + 2 H(+)(out) = glycyl-L-glutamate(in) + 2 H(+)(in). It catalyses the reaction L-alanyl-L-leucyl-L-alanine(out) + H(+)(out) = L-alanyl-L-leucyl-L-alanine(in) + H(+)(in). The enzyme catalyses L-alanyl-L-prolylglycine(out) + H(+)(out) = L-alanyl-L-prolylglycine(in) + H(+)(in). It carries out the reaction glycylglycyl-L-isoleucine(out) + H(+)(out) = glycylglycyl-L-isoleucine(in) + H(+)(in). The catalysed reaction is glycylglycyl-L-proline(out) + H(+)(out) = glycylglycyl-L-proline(in) + H(+)(in). It catalyses the reaction L-methionyl-L-phenylalanyl-L-methionine(out) + H(+)(out) = L-methionyl-L-phenylalanyl-L-methionine(in) + H(+)(in). The enzyme catalyses N-acetyl-D-muramoyl-L-alanyl-D-isoglutamine(out) + 2 H(+)(out) = N-acetyl-D-muramoyl-L-alanyl-D-isoglutamine(in) + 2 H(+)(in). It carries out the reaction N(alpha)-formyl-L-methionyl-L-leucyl-L-phenylalanine(out) + 2 H(+)(out) = N(alpha)-formyl-L-methionyl-L-leucyl-L-phenylalanine(in) + 2 H(+)(in). Its function is as follows. Electrogenic proton-coupled amino-acid transporter that transports oligopeptides of 2 to 4 amino acids with a preference for dipeptides. Transports neutral and monovalently charged peptides with a proton to peptide stoichiometry of 1:1 or 2:1. Primarily responsible for the absorption of dietary di- and tripeptides from the small intestinal lumen. Mediates transepithelial transport of muramyl and N-formylated bacterial dipeptides contributing to recognition of pathogenic bacteria by the mucosal immune system. This chain is Solute carrier family 15 member 1, found in Mus musculus (Mouse).